The primary structure comprises 310 residues: Transcriptional regulator NRG1 (310 aa).

A disordered region spans residues 85-131; sequence YYMGPPAQHRLPTPPPYPMSSPTTATAATPLSQQSPHLQPQQTLQQP. Positions 104–131 are enriched in low complexity; sequence SSPTTATAATPLSQQSPHLQPQQTLQQP. 2 C2H2-type zinc fingers span residues 228-250 and 256-280; these read HVCK…NRIH and HQCP…YKTH.

The protein localises to the nucleus. In terms of biological role, transcriptional repressor that binds NRG1 response elements (NRE) of target promoters. Involved in regulation of chlamydospore formation, hyphal growth, virulence, and stress response. Plays a key role in regulating true hyphal growth, but does not regulate pseudohyphal growth in the same fashion. Directs transcriptional repression of a subset of filament-specific genes such as HWP1, HYR1, ALS8, HWP1, or ECE1; via the TUP1 pathway. Functions with UME6 in a negative feedback loop to control the level and duration of filament-specific gene expression in response to inducing conditions. Plays a key role in biofilm formation and dispersion. Also plays the role of a negative regulator of virulence in mice models. Required for the expression of the cell wall genes RBR1. The chain is Transcriptional regulator NRG1 (NRG1) from Candida albicans (strain SC5314 / ATCC MYA-2876) (Yeast).